The sequence spans 215 residues: Eukaryotic translation initiation factor 4E-1 (215 aa).

Positions 1-35 are disordered; that stretch reads MAEDTETRPASAGAEEREEGEIADDGDGSAAAAAG. Positions 16-27 are enriched in acidic residues; sequence EREEGEIADDGD. EIF4G-binding regions lie at residues 40-43 and 50-86; these read HPLE and FDNP…NNIH. MRNA is bound by residues 58-63, K90, and 108-109; these read RAVAWG and WE. A disulfide bridge connects residues C113 and C151. The EIF4G-binding stretch occupies residues 134–143; the sequence is HTLLALIGEQ. MRNA is bound by residues 158-163 and 203-207; these read RKNQER and KRSDK.

It belongs to the eukaryotic initiation factor 4E family. EIF4F is a multi-subunit complex, the composition of which varies with external and internal environmental conditions. It is composed of at least EIF4A, EIF4E and EIF4G. EIF4E is also known to interact with other partners. In higher plants two isoforms of EIF4F have been identified, named isoform EIF4F and isoform EIF(iso)4F. Isoform EIF4F has subunits p220 and p26, whereas isoform EIF(iso)4F has subunits p82 and p28. As to quaternary structure, (Microbial infection) Interacts with potyvirus viral genome-linked protein (VPg); this interaction is possible in susceptible hosts but impaired in resistant plants. Post-translationally, according to the redox status, the Cys-113-Cys-151 disulfide bridge may have a role in regulating protein function by affecting its ability to bind capped mRNA.

It is found in the nucleus. It localises to the cytoplasm. Its function is as follows. Component of the protein complex eIF4F, which is involved in the recognition of the mRNA cap, ATP-dependent unwinding of 5'-terminal secondary structure and recruitment of mRNA to the ribosome. Recognizes and binds the 7-methylguanosine-containing mRNA cap during an early step in the initiation of protein synthesis and facilitates ribosome binding by inducing the unwinding of the mRNAs secondary structures. Key component of recessive resistance to potyviruses and bymoviruses, including barley yellow mosaic virus and barley mild mosaic virus. Functionally, (Microbial infection) Susceptibility host factor required for viral infection by recruiting viral RNAs to the host ribosomal complex via an interaction with viral genome-linked protein (VPg). This chain is Eukaryotic translation initiation factor 4E-1, found in Hordeum vulgare subsp. vulgare (Domesticated barley).